Consider the following 76-residue polypeptide: Protein OPG128 (76 aa).

C17 and C21 form a disulfide bridge.

It belongs to the orthopoxvirus OPG128 family. As to quaternary structure, interacts with sulfhydryl oxidase OPG072; this interaction involves formation of a transient disulfide-bonded intermediate, allowing disulfide bond transfer. Interacts with OPG088; this interaction involves formation of a transient disulfide-bonded intermediate, allowing disulfide bond transfer.

In terms of biological role, late protein which probably participates in disulfide bond formation by functioning as a thiol-disulfide transfer protein between membrane-associated OPG072 and OPG08. The complete pathway for formation of disulfide bonds in intracellular virion membrane proteins sequentially involves oxidation of OPG072, OPG128 and OPG08. In Variola virus (isolate Human/India/Ind3/1967) (VARV), this protein is Protein OPG128 (OPG128).